The sequence spans 319 residues: Acetyl-coenzyme A carboxylase carboxyl transferase subunit alpha (319 aa).

The 262-residue stretch at Asn35–Asp296 folds into the CoA carboxyltransferase C-terminal domain.

Belongs to the AccA family. As to quaternary structure, acetyl-CoA carboxylase is a heterohexamer composed of biotin carboxyl carrier protein (AccB), biotin carboxylase (AccC) and two subunits each of ACCase subunit alpha (AccA) and ACCase subunit beta (AccD).

The protein resides in the cytoplasm. The catalysed reaction is N(6)-carboxybiotinyl-L-lysyl-[protein] + acetyl-CoA = N(6)-biotinyl-L-lysyl-[protein] + malonyl-CoA. The protein operates within lipid metabolism; malonyl-CoA biosynthesis; malonyl-CoA from acetyl-CoA: step 1/1. Functionally, component of the acetyl coenzyme A carboxylase (ACC) complex. First, biotin carboxylase catalyzes the carboxylation of biotin on its carrier protein (BCCP) and then the CO(2) group is transferred by the carboxyltransferase to acetyl-CoA to form malonyl-CoA. In Escherichia coli O127:H6 (strain E2348/69 / EPEC), this protein is Acetyl-coenzyme A carboxylase carboxyl transferase subunit alpha.